The following is a 265-amino-acid chain: HUWE1-associated protein modifying stress responses (265 aa).

4 disordered regions span residues 1 to 22 (MEDK…HWFS), 145 to 170 (RNSR…GSSV), 195 to 218 (VRSS…RRNG), and 240 to 265 (GTRK…NRMI). Polar residues-rich tracts occupy residues 156–170 (VSPN…GSSV) and 195–212 (VRSS…SSNT).

This sequence belongs to the TAPR1 family. Oligomer.

It is found in the nucleus. It localises to the cytoplasm. Acts as a central player within a network of stress response pathways promoting cellular adaptability. Functions as a negative regulator of TP53/P53 in the cellular response to telomere erosion and probably also DNA damage. The protein is HUWE1-associated protein modifying stress responses of Xenopus laevis (African clawed frog).